Reading from the N-terminus, the 376-residue chain is Glycerol-3-phosphate acyltransferase 9 (376 aa).

Topologically, residues 1–78 (MSSTAGRLVT…SNPPEPWNWN (78 aa)) are cytoplasmic. Serine 13 is subject to Phosphoserine. The next 3 membrane-spanning stretches (helical) occupy residues 79-99 (IYLF…LFPL), 102-122 (FTLA…NALL), and 135-155 (VLVE…VKYH). Residues 156–376 (GPRPSIRPKQ…ESILARLEEK (221 aa)) are Cytoplasmic-facing. A catalytic region spans residues 168–180 (VANHTSMIDFIVL). Positions 171-176 (HTSMID) match the HXXXXD motif motif. 209–218 (GCIWFNRSEA) is a binding site for sn-glycerol 3-phosphate. Positions 242-262 (IFPEGTCVNNNYTVMFKKGAF) are glycerol-3-phosphate binding. Residues 266-275 (CTVCPIAIKY) form a catalytic region. The segment at 369–373 (ILARL) is endoplasmic reticulum targeting.

Belongs to the 1-acyl-sn-glycerol-3-phosphate acyltransferase family. In terms of assembly, self-interacts. Interacts with LPAT2 and LPCAT2. As to expression, up-regulated during embryogenesis. Expressed in seedlings, leaves, stems, roots, floral buds, flowers, pollen, and siliques at various developmental stages.

The protein localises to the endoplasmic reticulum membrane. It carries out the reaction sn-glycerol 3-phosphate + an acyl-CoA = a 1-acyl-sn-glycero-3-phosphate + CoA. It functions in the pathway glycerolipid metabolism; triacylglycerol biosynthesis. In terms of biological role, essential protein. Required for male and female gametophytes development. Exhibits sn-1 acyltransferase activity with high specificity for acyl-coenzyme A, thus triggering storage lipid biosynthesis and playing an important role in the Kennedy pathway of glycerolipid biosynthesis. Catalyzes triacylglycerol (TAG) accumulation involved in membrane lipid and oil biosynthesis, especially in seeds. Also contributes to the biosynthesis of both polar lipids and TAG in developing leaves, as well as lipid droplet production in developing pollen grains. Seems to not contribute to surface lipid biosynthesis (e.g. waxes and cutin). In Arabidopsis thaliana (Mouse-ear cress), this protein is Glycerol-3-phosphate acyltransferase 9.